The primary structure comprises 982 residues: Nitrate reductase [NADPH] (982 aa).

Residues 1 to 128 form a disordered region; sequence MEAPALEQRQ…PPSTRLTTIL (128 aa). Over residues 10-20 the composition is skewed to basic and acidic residues; sequence QSLHDSSERQQ. Positions 63–110 are enriched in low complexity; sequence TASPTTTDFSSSSSDDNSTTLETSVNYSHSSNTNTNTSCPPSPITSSS. Cys240 contacts Mo-molybdopterin. The 76-residue stretch at 617–692 folds into the Cytochrome b5 heme-binding domain; sequence TRLITLEELR…MPTYHIGTLT (76 aa). Heme is bound by residues His652 and His675. Positions 721 to 836 constitute an FAD-binding FR-type domain; sequence KTWNSAILTF…KGPVGKFVYQ (116 aa). FAD is bound by residues 776 to 779, 794 to 798, 810 to 812, Ser860, and Thr863; these read RAYT, LVKIY, and QMT. 952 to 961 contributes to the NADP(+) binding site; the sequence is MVLLCGPEGM.

It belongs to the nitrate reductase family. As to quaternary structure, homodimer. The cofactor is FAD. Requires heme as cofactor. Mo-molybdopterin serves as cofactor.

It catalyses the reaction nitrite + NADP(+) + H2O = nitrate + NADPH + H(+). Its pathway is nitrogen metabolism; nitrate reduction (assimilation). Functionally, nitrate reductase is a key enzyme involved in the first step of nitrate assimilation in plants, fungi and bacteria. This chain is Nitrate reductase [NADPH] (nit-3), found in Neurospora crassa (strain ATCC 24698 / 74-OR23-1A / CBS 708.71 / DSM 1257 / FGSC 987).